Here is a 1002-residue protein sequence, read N- to C-terminus: Golgin subfamily A member 2 (1002 aa).

A compositionally biased stretch (pro residues) spans 1 to 11 (MWPQPRLPPRP). The tract at residues 1 to 84 (MWPQPRLPPR…AATLQPSDDT (84 aa)) is interaction with p115/USO1. The disordered stretch occupies residues 1–107 (MWPQPRLPPR…TSMAASQNHD (107 aa)). Positions 16–892 (ETRQSKLAAA…LELQELVLRL (877 aa)) form a coiled coil. Dimethylated arginine occurs at positions 18, 30, and 35. Residues 26-49 (KKKLREYQQRNSPGVPTGAKKKKK) carry the Nuclear localization signal motif. Ser37 carries the post-translational modification Phosphoserine. Residues 52-63 (NGSNPETTTSGG) show a composition bias toward polar residues. Ser66 bears the Phosphoserine mark. Polar residues predominate over residues 95 to 105 (ASLTSMAASQN). 3 positions are modified to phosphoserine: Ser273, Ser438, and Ser690. The interval 694 to 724 (HPGEGDGLDREEEEDEEEEEEEAVAVPQPMP) is disordered. Residues 702-716 (DREEEEDEEEEEEEA) are compositionally biased toward acidic residues. Ser937, Ser953, and Ser981 each carry phosphoserine. Residues 992–1002 (DENDEVKITVI) form an interaction with GORASP1/GRASP65 region.

The protein belongs to the GOLGA2 family. Homodimer, may assemble into homohexamers. Homotetramer; forms a parallel homotetramer with a flexible rod-like structure that can give rise to I- and Y-shaped conformations. Interacts with GORASP1/GRASP65. The homooligomer forms a complex with GORASP1 with a 1:1 stoichiometry. Interacts with RAB1B that has been activated by GTP-binding. Interacts with p115/USO1; interaction with p115/USO1 inhibits interaction with STX5 and/or RAB1B. Interacts with STX5. Interacts with ZFPL1. Interacts with AKAP450/AKAP9; leading to recruit AKAP450/AKAP9 to the cis-Golgi. In terms of processing, cleaved by caspases at the onset of apoptosis. Post-translationally, methylation by PRMT5 is required for Golgi ribbon formation. While dimethylation at Arg-30 and Arg-35 are confirmed in vivo, it is unclear whether Arg-18 is methylated in vivo. Phosphorylated at Ser-37 by CDK1 at the onset of mitosis, inhibiting the interaction with p115/USO1 and triggering Golgi disassembly. Phosphorylated at Ser-37 in prophase as the Golgi complex starts to break down, and remains phosphorylated during further breakdown and partitioning of the Golgi fragments in metaphase and anaphase. In telophase, GM130 is dephosphorylated by PP2A as the Golgi fragments start to reassemble.

It localises to the golgi apparatus. It is found in the cis-Golgi network membrane. Its subcellular location is the endoplasmic reticulum-Golgi intermediate compartment membrane. The protein localises to the cytoplasm. The protein resides in the cytoskeleton. It localises to the spindle pole. Its function is as follows. Peripheral membrane component of the cis-Golgi stack that acts as a membrane skeleton that maintains the structure of the Golgi apparatus, and as a vesicle thether that facilitates vesicle fusion to the Golgi membrane. Required for normal protein transport from the endoplasmic reticulum to the Golgi apparatus and the cell membrane. Together with p115/USO1 and STX5, involved in vesicle tethering and fusion at the cis-Golgi membrane to maintain the stacked and inter-connected structure of the Golgi apparatus. Plays a central role in mitotic Golgi disassembly: phosphorylation at Ser-37 by CDK1 at the onset of mitosis inhibits the interaction with p115/USO1, preventing tethering of COPI vesicles and thereby inhibiting transport through the Golgi apparatus during mitosis. Also plays a key role in spindle pole assembly and centrosome organization. Promotes the mitotic spindle pole assembly by activating the spindle assembly factor TPX2 to nucleate microtubules around the Golgi and capture them to couple mitotic membranes to the spindle: upon phosphorylation at the onset of mitosis, GOLGA2 interacts with importin-alpha via the nuclear localization signal region, leading to recruit importin-alpha to the Golgi membranes and liberate the spindle assembly factor TPX2 from importin-alpha. TPX2 then activates AURKA kinase and stimulates local microtubule nucleation. Upon filament assembly, nascent microtubules are further captured by GOLGA2, thus linking Golgi membranes to the spindle. Regulates the meiotic spindle pole assembly, probably via the same mechanism. Also regulates the centrosome organization. Also required for the Golgi ribbon formation and glycosylation of membrane and secretory proteins. The chain is Golgin subfamily A member 2 (GOLGA2) from Homo sapiens (Human).